The chain runs to 236 residues: Small ribosomal subunit protein eS6 (236 aa).

Belongs to the eukaryotic ribosomal protein eS6 family. As to quaternary structure, component of the small ribosomal subunit. Mature ribosomes consist of a small (40S) and a large (60S) subunit. The 40S subunit contains about 32 different proteins and 1 molecule of RNA (18S). The 60S subunit contains 45 different proteins and 3 molecules of RNA (25S, 5.8S and 5S).

It is found in the cytoplasm. Component of the ribosome, a large ribonucleoprotein complex responsible for the synthesis of proteins in the cell. The small ribosomal subunit (SSU) binds messenger RNAs (mRNAs) and translates the encoded message by selecting cognate aminoacyl-transfer RNA (tRNA) molecules. The large subunit (LSU) contains the ribosomal catalytic site termed the peptidyl transferase center (PTC), which catalyzes the formation of peptide bonds, thereby polymerizing the amino acids delivered by tRNAs into a polypeptide chain. The nascent polypeptides leave the ribosome through a tunnel in the LSU and interact with protein factors that function in enzymatic processing, targeting, and the membrane insertion of nascent chains at the exit of the ribosomal tunnel. RPS6A is involved in nucleolar processing of pre-18S ribosomal RNA and ribosome assembly. This chain is Small ribosomal subunit protein eS6 (RPS6A), found in Candida albicans (strain SC5314 / ATCC MYA-2876) (Yeast).